The primary structure comprises 648 residues: FAD-binding monooxygenase trt3 (648 aa).

Residues 118 to 121, 130 to 131, and tyrosine 136 contribute to the FAD site; these read TWYW and DI. 128 to 130 lines the NADP(+) pocket; sequence MCD. NADP(+) is bound by residues 274–280 and 297–298; these read TGSTAVQ and RT.

It belongs to the FAD-binding monooxygenase family. Requires FAD as cofactor.

Its pathway is secondary metabolite biosynthesis; terpenoid biosynthesis. Its function is as follows. FAD-binding monooxygenase; part of the gene cluster that mediates the biosynthesis of terretonin, a fungal meroterpenoid that acts as a mycotoxin. The first step of the pathway is the synthesis of 3,5-dimethylorsellinic acid (DMOA) by the polyketide synthase trt4. DMOA is then prenylated into farnesyl-DMOA by the polyprenyl transferase trt2. Methylation by the methyltransferase trt5 then leads to farnesyl-DMOA methyl ester which is further subject to epoxidation by the FAD-dependent monooxygenase trt8 to yield epoxyfarnesyl-DMOA methyl ester. Cyclization of epoxyfarnesyl-DMOA methyl ester by the terpene cyclase trt1 leads to a tetracycle intermediate which is in turn converted to preterretonin. Dehydrogenase trt9 comes next to transform preterretonin to preterrenoid. The FAD-dependent monooxygenase trt3 is then required for the C-hydroxylation at C16 of preterrenoid to yield terrenoid. The cytochrome P450 trt6 catalyzes three successive oxidations to transform terrenoid into an unstable intermediate, which then undergoes the D-ring expansion and unusual rearrangement of the methoxy group to afford the core skeleton of terretonin. Trt14 catalyzes the D-ring expansion of terretonin involving intramolecular methoxy rearrangement as well as the hydrolysis of the expanded D-ring and the methyl ester moiety. Finally, the nonheme iron-dependent dioxygenase trt7 accomplishes the last two oxidation reactions steps to complete the biosynthesis of terretonin. Terretonin C is produced via spontaneous decarboxylation of the terretonin precursor. Another shunt product of the terretonin biosynthesis is dihydrofarnesyl-DMOA, derived from epoxyfarnesyl-DMOA through hydrolysis of the epoxide. This is FAD-binding monooxygenase trt3 from Aspergillus terreus (strain NIH 2624 / FGSC A1156).